Reading from the N-terminus, the 52-residue chain is UPF0181 protein CGSHiGG_01050 (52 aa).

This sequence belongs to the UPF0181 family.

The polypeptide is UPF0181 protein CGSHiGG_01050 (Haemophilus influenzae (strain PittGG)).